A 223-amino-acid polypeptide reads, in one-letter code: RNA-free ribonuclease P (223 aa).

This sequence belongs to the HARP family.

The enzyme catalyses Endonucleolytic cleavage of RNA, removing 5'-extranucleotides from tRNA precursor.. In terms of biological role, RNA-free RNase P that catalyzes the removal of the 5'-leader sequence from pre-tRNA to produce the mature 5'-terminus. This Methanococcus maripaludis (strain C7 / ATCC BAA-1331) protein is RNA-free ribonuclease P.